A 33-amino-acid polypeptide reads, in one-letter code: Cytochrome b6-f complex subunit 8 (33 aa).

A helical transmembrane segment spans residues leucine 2–valine 22.

Belongs to the PetN family. As to quaternary structure, the 4 large subunits of the cytochrome b6-f complex are cytochrome b6, subunit IV (17 kDa polypeptide, PetD), cytochrome f and the Rieske protein, while the 4 small subunits are PetG, PetL, PetM and PetN. The complex functions as a dimer.

It is found in the plastid. Its subcellular location is the organellar chromatophore thylakoid membrane. Functionally, component of the cytochrome b6-f complex, which mediates electron transfer between photosystem II (PSII) and photosystem I (PSI), cyclic electron flow around PSI, and state transitions. The sequence is that of Cytochrome b6-f complex subunit 8 from Paulinella chromatophora.